The sequence spans 465 residues: MNAQLTMEAIGELHGVSHEPVPAPADLLGGSPHARSSVGHRGSHLPPAHPRSMGMASLLDGGSGGSDYHHHHRAPEHSLAGPLHPTMTMACETPPGMSMPTTYTTLTPLQPLPPISTVSDKFPHHHHHHHHHHHPHHHQRLAGNVSGSFTLMRDERGLASMNNLYTPYHKDVAGMGQSLSPLSGSGLGSIHNSQQGLPHYAHPGAAMPTDKMLTPNDFEAHHPAMLGRHGEQHLTPTSAGMVPINGLPPHHPHAHLNAQGHGQLLGTAREPNPSVTGAQVSNGSNSGQMEEINTKEVAQRITTELKRYSIPQAIFAQRVLCRSQGTLSDLLRNPKPWSKLKSGRETFRRMWKWLQEPEFQRMSALRLAACKRKEQEHGKDRGNTPKKPRLVFTDVQRRTLHAIFKENKRPSKELQITISQQLGLELSTVSNFFMNARRRSLDKWQDEGSSNSGNSSSSSSTCTKA.

2 disordered regions span residues 15-84 (GVSH…GPLH) and 119-141 (SDKFPHHHHHHHHHHHPHHHQRL). Over residues 123–140 (PHHHHHHHHHHHPHHHQR) the composition is skewed to basic residues. The segment at residues 283–369 (GSNSGQMEEI…QRMSALRLAA (87 aa)) is a DNA-binding region (CUT). Positions 385–444 (PKKPRLVFTDVQRRTLHAIFKENKRPSKELQITISQQLGLELSTVSNFFMNARRRSLDKW) form a DNA-binding region, homeobox. Positions 442-465 (DKWQDEGSSNSGNSSSSSSTCTKA) are disordered. Low complexity predominate over residues 448–465 (GSSNSGNSSSSSSTCTKA).

Belongs to the CUT homeobox family. Binds DNA as a monomer. Expressed in liver, brain, spleen and testis.

The protein resides in the nucleus. In terms of biological role, transcriptional activator. Binds the consensus sequence 5'-DHWATTGAYTWWD-3' on a variety of gene promoters such as those of HNF3B and TTR. Important for liver genes transcription. The affinity of HNF-6-alpha and HNF-6-beta for DNA differs depending on the target sequence. The chain is Hepatocyte nuclear factor 6 (Onecut1) from Rattus norvegicus (Rat).